The following is a 272-amino-acid chain: HMP-PP phosphatase (272 aa).

Aspartate 8 (nucleophile) is an active-site residue. Positions 8, 10, and 212 each coordinate Mg(2+).

Belongs to the HAD-like hydrolase superfamily. Cof family. Mg(2+) is required as a cofactor.

It catalyses the reaction 4-amino-2-methyl-5-(diphosphooxymethyl)pyrimidine + H2O = 4-amino-2-methyl-5-(phosphooxymethyl)pyrimidine + phosphate + H(+). Its function is as follows. Catalyzes the hydrolysis of 4-amino-2-methyl-5-hydroxymethylpyrimidine pyrophosphate (HMP-PP) to 4-amino-2-methyl-5-hydroxymethylpyrimidine phosphate (HMP-P). This Escherichia coli O6:H1 (strain CFT073 / ATCC 700928 / UPEC) protein is HMP-PP phosphatase.